A 293-amino-acid polypeptide reads, in one-letter code: Putative ribose uptake protein RbsU (293 aa).

A run of 10 helical transmembrane segments spans residues 5-24, 34-51, 58-80, 95-114, 121-138, 153-170, 177-199, 212-234, 241-263, and 273-292; these read AILIGLGPLLGWGLFPTIAS, IFGATVGTLIFAIVLALF, GGMALVFSLISGAGWAFGQIITF, TTAFQLLGASLWGVFALGNW, IIGFLALLVILIGARMTV, SAVILLLVGEIGYWIYSA, IGGFKAFLPQAIGMVIVAVIYAL, VSWQQTISGFFFAFAALTYLISA, LATGFVLSQTSVVLATLTGIFFL, and MITIVGLVLILVAASITVFI.

Belongs to the GRP transporter (TC 2.A.7.5) family.

It is found in the cell membrane. Functionally, could be involved in the uptake of ribose. This Staphylococcus epidermidis (strain ATCC 35984 / DSM 28319 / BCRC 17069 / CCUG 31568 / BM 3577 / RP62A) protein is Putative ribose uptake protein RbsU (rbsU).